A 420-amino-acid polypeptide reads, in one-letter code: E3 ubiquitin-protein ligase pellino homolog 2 (420 aa).

The 188-residue stretch at 15–202 (EPVKYGELVV…MHPRGGFTEE (188 aa)) folds into the FHA; atypical domain.

This sequence belongs to the pellino family. As to quaternary structure, interacts with TRAF6, IRAK1, IRAK4 and MAP3K7. Interacts with BCL10; this interaction is impaired by SOCS3. In terms of processing, phosphorylated by IRAK1 and IRAK4 enhancing its E3 ligase activity.

It catalyses the reaction S-ubiquitinyl-[E2 ubiquitin-conjugating enzyme]-L-cysteine + [acceptor protein]-L-lysine = [E2 ubiquitin-conjugating enzyme]-L-cysteine + N(6)-ubiquitinyl-[acceptor protein]-L-lysine.. Its pathway is protein modification; protein ubiquitination. Its function is as follows. E3 ubiquitin ligase catalyzing the covalent attachment of ubiquitin moieties onto substrate proteins. Involved in the TLR and IL-1 signaling pathways via interaction with the complex containing IRAK kinases and TRAF6. Mediates IL1B-induced IRAK1 'Lys-63'-linked polyubiquitination and possibly 'Lys-48'-linked ubiquitination. May be important for LPS- and IL1B-induced MAP3K7-dependent, but not MAP3K3-dependent, NF-kappa-B activation. Can activate the MAP (mitogen activated protein) kinase pathway leading to activation of ELK1. The polypeptide is E3 ubiquitin-protein ligase pellino homolog 2 (PELI2) (Homo sapiens (Human)).